The following is a 279-amino-acid chain: Thymidylate synthase (279 aa).

132–133 is a binding site for dUMP; the sequence is RR. Cys-153 acts as the Nucleophile in catalysis. Residues 178-181, Asn-189, and 219-221 contribute to the dUMP site; these read RSND and HIY. Asp-181 lines the (6R)-5,10-methylene-5,6,7,8-tetrahydrofolate pocket. Residue Ala-278 participates in (6R)-5,10-methylene-5,6,7,8-tetrahydrofolate binding.

It belongs to the thymidylate synthase family. Bacterial-type ThyA subfamily. In terms of assembly, homodimer.

The protein localises to the cytoplasm. It carries out the reaction dUMP + (6R)-5,10-methylene-5,6,7,8-tetrahydrofolate = 7,8-dihydrofolate + dTMP. Its pathway is pyrimidine metabolism; dTTP biosynthesis. Its function is as follows. Catalyzes the reductive methylation of 2'-deoxyuridine-5'-monophosphate (dUMP) to 2'-deoxythymidine-5'-monophosphate (dTMP) while utilizing 5,10-methylenetetrahydrofolate (mTHF) as the methyl donor and reductant in the reaction, yielding dihydrofolate (DHF) as a by-product. This enzymatic reaction provides an intracellular de novo source of dTMP, an essential precursor for DNA biosynthesis. This is Thymidylate synthase from Lactococcus lactis subsp. lactis (strain IL1403) (Streptococcus lactis).